Here is a 336-residue protein sequence, read N- to C-terminus: tRNA N6-adenosine threonylcarbamoyltransferase (336 aa).

Fe cation is bound by residues His112 and His116. Substrate is bound by residues Leu136–Gly140, Asp169, Gly182, and Asn276. Asp304 lines the Fe cation pocket.

Belongs to the KAE1 / TsaD family. The cofactor is Fe(2+).

It is found in the cytoplasm. The enzyme catalyses L-threonylcarbamoyladenylate + adenosine(37) in tRNA = N(6)-L-threonylcarbamoyladenosine(37) in tRNA + AMP + H(+). Functionally, required for the formation of a threonylcarbamoyl group on adenosine at position 37 (t(6)A37) in tRNAs that read codons beginning with adenine. Is involved in the transfer of the threonylcarbamoyl moiety of threonylcarbamoyl-AMP (TC-AMP) to the N6 group of A37, together with TsaE and TsaB. TsaD likely plays a direct catalytic role in this reaction. The chain is tRNA N6-adenosine threonylcarbamoyltransferase from Francisella tularensis subsp. tularensis (strain FSC 198).